A 312-amino-acid polypeptide reads, in one-letter code: Olfactory receptor 867 (312 aa).

The Extracellular portion of the chain corresponds to 1 to 6 (MILNCN). A helical transmembrane segment spans residues 7 to 30 (PFSGLFLSMYLVTVLGNLLIILAV). Residues 31–38 (SSNSHLHN) are Cytoplasmic-facing. A helical membrane pass occupies residues 39–60 (LMYFFLSNLSFVDICFISTTIP). Topologically, residues 61–81 (KMLVNIHSQTKDISYIECLSQ) are extracellular. Cysteines 78 and 160 form a disulfide. Residues 82–101 (VYFLTTFGGMDNFLLTLMAC) traverse the membrane as a helical segment. At 102-120 (DRYVAICHPLNYTVIMNLQ) the chain is on the cytoplasmic side. A helical membrane pass occupies residues 121-139 (LCALLILMFWLIMFCVSLI). Residues 140–177 (HVLLMNELNFSRGTEIPHFFCELAQVLKVANSDTHINN) lie on the Extracellular side of the membrane. N-linked (GlcNAc...) asparagine glycosylation is present at Asn-148. Residues 178–200 (VFMYVVTSLLGLIPMTGILMSYS) form a helical membrane-spanning segment. Over 201–217 (QIASSLLKMSSSVSKYK) the chain is Cytoplasmic. Residues 218-241 (AFSTCGSHLCVVSLFYGSATIVYF) traverse the membrane as a helical segment. The Extracellular segment spans residues 242-253 (CSSVLHSTHKKM). The chain crosses the membrane as a helical span at residues 254–273 (IASLMYTVISPMLNPFIYSL). The Cytoplasmic portion of the chain corresponds to 274-312 (RNKDVKGALGKLFIRVASCPLWSKDFRPKFILKPERQSL).

This sequence belongs to the G-protein coupled receptor 1 family. In terms of tissue distribution, epithelium of the tongue; including the taste buds.

It localises to the cell membrane. In terms of biological role, possible olfactory or taste receptor. This Rattus norvegicus (Rat) protein is Olfactory receptor 867 (Olr867).